Here is a 114-residue protein sequence, read N- to C-terminus: Probable non-functional T cell receptor beta variable 5-7 (114 aa).

The signal sequence occupies residues 1-21 (MGPGLLCWVLLCPLGEGPVDA). An Ig-like domain is found at 22 to 114 (GVTQSPTHLI…SALYLCASSL (93 aa)). Cys42 and Cys110 are disulfide-bonded. An N-linked (GlcNAc...) asparagine glycan is attached at Asn90.

Alpha-beta TR is a heterodimer composed of an alpha and beta chain; disulfide-linked. The alpha-beta TR is associated with the transmembrane signaling CD3 coreceptor proteins to form the TR-CD3 (TcR or TCR). The assembly of alpha-beta TR heterodimers with CD3 occurs in the endoplasmic reticulum where a single alpha-beta TR heterodimer associates with one CD3D-CD3E heterodimer, one CD3G-CD3E heterodimer and one CD247 homodimer forming a stable octameric structure. CD3D-CD3E and CD3G-CD3E heterodimers preferentially associate with TR alpha and TR beta chains, respectively. The association of the CD247 homodimer is the last step of TcR assembly in the endoplasmic reticulum and is required for transport to the cell surface.

The protein resides in the cell membrane. In terms of biological role, probable non-functional open reading frame (ORF) of V region of the variable domain of T cell receptor (TR) beta chain. Non-functional ORF generally cannot participate in the synthesis of a productive T cell receptor (TR) chain due to altered V-(D)-J or switch recombination and/or splicing site (at mRNA level) and/or conserved amino acid change (protein level). Alpha-beta T cell receptors are antigen specific receptors which are essential to the immune response and are present on the cell surface of T lymphocytes. Recognize peptide-major histocompatibility (MH) (pMH) complexes that are displayed by antigen presenting cells (APC), a prerequisite for efficient T cell adaptive immunity against pathogens. Binding of alpha-beta TR to pMH complex initiates TR-CD3 clustering on the cell surface and intracellular activation of LCK that phosphorylates the ITAM motifs of CD3G, CD3D, CD3E and CD247 enabling the recruitment of ZAP70. In turn ZAP70 phosphorylates LAT, which recruits numerous signaling molecules to form the LAT signalosome. The LAT signalosome propagates signal branching to three major signaling pathways, the calcium, the mitogen-activated protein kinase (MAPK) kinase and the nuclear factor NF-kappa-B (NF-kB) pathways, leading to the mobilization of transcription factors that are critical for gene expression and essential for T cell growth and differentiation. The T cell repertoire is generated in the thymus, by V-(D)-J rearrangement. This repertoire is then shaped by intrathymic selection events to generate a peripheral T cell pool of self-MH restricted, non-autoaggressive T cells. Post-thymic interaction of alpha-beta TR with the pMH complexes shapes TR structural and functional avidity. This chain is Probable non-functional T cell receptor beta variable 5-7, found in Homo sapiens (Human).